We begin with the raw amino-acid sequence, 122 residues long: Probable transcription factor PqrA (122 aa).

In terms of domain architecture, HTH araC/xylS-type spans Asn7 to Asn107. DNA-binding regions (H-T-H motif) lie at residues Asp26–Lys47 and Ile74–Phe97.

Upon expression in E.coli strain KY2563 confers resistance to antibiotics ofloxacin, ciprofloxacin, tetracycline, chloramphenicol, and ceftazidime (increases minimal inhibitory concentration by 8-32 times); also decreases expression of OmpF. The protein is Probable transcription factor PqrA of Proteus vulgaris.